The primary structure comprises 123 residues: Large ribosomal subunit protein uL14 (123 aa).

It belongs to the universal ribosomal protein uL14 family. As to quaternary structure, part of the 50S ribosomal subunit. Forms a cluster with proteins L3 and L19. In the 70S ribosome, L14 and L19 interact and together make contacts with the 16S rRNA in bridges B5 and B8.

Functionally, binds to 23S rRNA. Forms part of two intersubunit bridges in the 70S ribosome. This Hamiltonella defensa subsp. Acyrthosiphon pisum (strain 5AT) protein is Large ribosomal subunit protein uL14.